We begin with the raw amino-acid sequence, 511 residues long: ILIALLCTLPFLFFLKKWRRSYSGKTPPPSPPKLPVLGNLHQLGTFPHRSLQSLSRRYGPVMQLHFGSVPVLVASSPEAAREIMKNQDLNFSNRPNLSIPRRLLYDNHDVAFAPYGEYWRQIRSICVLQLLSNKRVQSFRRVREEETSIMVEKIMQLQKTTPTAAVNLTDLLTCLTNDVFCRIALGKKYGGTTTGDGEYHVRSLKKNLAEFYVLLGISPLWEYIPWLEWTRRFDGVDRRIEEVSRTFDEFLGKVIQEHRVRDKREDTTVVGDTVGLDFVDLLLQFQRENERSSSPVDDLTIKAVILDMFLAGTDTTVTALEWALSELIKNPRAMKILQKEVRGVAGSKGEIEESDLEKMPYLKAVMKESLRLHAPVPLLVPRESTRDTKVLGYDVASGTRVLINCWAIGRDSSVWEESETFLPERFLETSIDYRGMHFELIPFGSGRRGCPGATFAAAIDELALATLVHKFDFKLPNGVRVEDLDMSEGSGFTIHKKFPLLVVPTPHACTS.

2 helical membrane passes run 1 to 15 and 61 to 77; these read ILIA…LFFL and VMQL…ASSP. Residues Asn-90, Asn-96, and Asn-167 are each glycosylated (N-linked (GlcNAc...) asparagine). Cys-450 contributes to the heme binding site.

The protein belongs to the cytochrome P450 family. Requires heme as cofactor.

Its subcellular location is the membrane. This is Cytochrome P450 71A6 (CYP71A6) from Nepeta racemosa (Catmint).